Here is a 283-residue protein sequence, read N- to C-terminus: Adenylate kinase 2, chloroplastic (283 aa).

The N-terminal 59 residues, 1 to 59 (MTGCVNSISPPPVTLYRHRASPSRSSFSLSGDALHSLYRHRRVSRSPSIIAPKFQIVAA), are a transit peptide targeting the chloroplast. Position 74 to 79 (74 to 79 (ASGKGT)) interacts with ATP. The interval 94–123 (SAGDLLRAEIASGSENGRRAKEHMEKGQLV) is NMP. AMP is bound by residues Arg100, 121–123 (QLV), 150–153 (GYPR), and Gln157. The segment at 187 to 220 (GRRLDPVTGKIYHLKYSPPETEEIAVRLTQRFDD) is LID. Arg188 is a binding site for ATP. AMP is bound by residues Arg217 and Arg228.

It belongs to the adenylate kinase family. Monomer.

It is found in the plastid. The protein resides in the chloroplast stroma. It catalyses the reaction AMP + ATP = 2 ADP. Catalyzes the reversible transfer of the terminal phosphate group between ATP and AMP. Plays an important role in cellular energy homeostasis and in adenine nucleotide metabolism. Plays a major role in the equilibration of adenylates and de novo synthesis of ADP in the plastid stroma. The sequence is that of Adenylate kinase 2, chloroplastic from Arabidopsis thaliana (Mouse-ear cress).